Reading from the N-terminus, the 267-residue chain is Outer membrane protein assembly factor BamD (267 aa).

The first 16 residues, 1 to 16, serve as a signal peptide directing secretion; sequence MKKILLTVSLGLALSA. Residue Cys-17 is the site of N-palmitoyl cysteine attachment. Cys-17 carries the S-diacylglycerol cysteine lipid modification.

The protein belongs to the BamD family. As to quaternary structure, part of the Bam complex.

It is found in the cell outer membrane. Part of the outer membrane protein assembly complex, which is involved in assembly and insertion of beta-barrel proteins into the outer membrane. Required for efficient transformation of Neisseria gonorrhoeae by species-related DNA. This chain is Outer membrane protein assembly factor BamD, found in Neisseria gonorrhoeae.